A 155-amino-acid chain; its full sequence is Aspartate carbamoyltransferase regulatory chain (155 aa).

Zn(2+) is bound by residues Cys112, Cys117, Cys138, and Cys141.

It belongs to the PyrI family. Contains catalytic and regulatory chains. Zn(2+) is required as a cofactor.

In terms of biological role, involved in allosteric regulation of aspartate carbamoyltransferase. This Methanocorpusculum labreanum (strain ATCC 43576 / DSM 4855 / Z) protein is Aspartate carbamoyltransferase regulatory chain.